The chain runs to 428 residues: Exodeoxyribonuclease 7 large subunit (428 aa).

It belongs to the XseA family. In terms of assembly, heterooligomer composed of large and small subunits.

It localises to the cytoplasm. The enzyme catalyses Exonucleolytic cleavage in either 5'- to 3'- or 3'- to 5'-direction to yield nucleoside 5'-phosphates.. Bidirectionally degrades single-stranded DNA into large acid-insoluble oligonucleotides, which are then degraded further into small acid-soluble oligonucleotides. This chain is Exodeoxyribonuclease 7 large subunit, found in Mycobacterium leprae (strain TN).